Here is a 358-residue protein sequence, read N- to C-terminus: Methylthioribose-1-phosphate isomerase (358 aa).

Residues 54–56, Arg96, and Gln205 contribute to the substrate site; that span reads RGA. The active-site Proton donor is Asp246. Residue 256-257 participates in substrate binding; that stretch reads NK.

Belongs to the eIF-2B alpha/beta/delta subunits family. MtnA subfamily.

It carries out the reaction 5-(methylsulfanyl)-alpha-D-ribose 1-phosphate = 5-(methylsulfanyl)-D-ribulose 1-phosphate. It participates in amino-acid biosynthesis; L-methionine biosynthesis via salvage pathway; L-methionine from S-methyl-5-thio-alpha-D-ribose 1-phosphate: step 1/6. Catalyzes the interconversion of methylthioribose-1-phosphate (MTR-1-P) into methylthioribulose-1-phosphate (MTRu-1-P). The chain is Methylthioribose-1-phosphate isomerase from Pseudomonas paraeruginosa (strain DSM 24068 / PA7) (Pseudomonas aeruginosa (strain PA7)).